We begin with the raw amino-acid sequence, 85 residues long: Alpha-insect toxin Bot14 (85 aa).

A signal peptide spans 1 to 18 (MSSLMISTAMKGKAPYRQ). Residues 20 to 84 (RDGYIAQPHN…GIIVHGEKCH (65 aa)) enclose the LCN-type CS-alpha/beta domain. Intrachain disulfides connect cysteine 30/cysteine 83, cysteine 34/cysteine 55, cysteine 41/cysteine 65, and cysteine 45/cysteine 67.

Belongs to the long (4 C-C) scorpion toxin superfamily. Sodium channel inhibitor family. Alpha subfamily. Expressed by the venom gland.

The protein localises to the secreted. Alpha toxins bind voltage-independently at site-3 of sodium channels (Nav) and inhibit the inactivation of the activated channels, thereby blocking neuronal transmission. This toxin is active only on insects. In Buthus occitanus tunetanus (Common European scorpion), this protein is Alpha-insect toxin Bot14.